A 348-amino-acid chain; its full sequence is Elongation factor Ts (348 aa).

Positions 80 to 83 (TDFV) are involved in Mg(2+) ion dislocation from EF-Tu.

Belongs to the EF-Ts family.

It is found in the cytoplasm. Functionally, associates with the EF-Tu.GDP complex and induces the exchange of GDP to GTP. It remains bound to the aminoacyl-tRNA.EF-Tu.GTP complex up to the GTP hydrolysis stage on the ribosome. The chain is Elongation factor Ts from Streptococcus mutans serotype c (strain ATCC 700610 / UA159).